The primary structure comprises 236 residues: Sugar fermentation stimulation protein homolog (236 aa).

The protein belongs to the SfsA family.

The protein is Sugar fermentation stimulation protein homolog of Gloeobacter violaceus (strain ATCC 29082 / PCC 7421).